The following is a 404-amino-acid chain: Dual-specificity RNA methyltransferase RlmN (404 aa).

Glu-118 (proton acceptor) is an active-site residue. A Radical SAM core domain is found at Val-125–Arg-357. Cys-132 and Cys-368 are joined by a disulfide. Cys-139, Cys-143, and Cys-146 together coordinate [4Fe-4S] cluster. Residues Gly-194 to Glu-195, Ser-226, Ser-248 to His-250, and Asn-325 each bind S-adenosyl-L-methionine. Cys-368 (S-methylcysteine intermediate) is an active-site residue.

It belongs to the radical SAM superfamily. RlmN family. It depends on [4Fe-4S] cluster as a cofactor.

It localises to the cytoplasm. The catalysed reaction is adenosine(2503) in 23S rRNA + 2 reduced [2Fe-2S]-[ferredoxin] + 2 S-adenosyl-L-methionine = 2-methyladenosine(2503) in 23S rRNA + 5'-deoxyadenosine + L-methionine + 2 oxidized [2Fe-2S]-[ferredoxin] + S-adenosyl-L-homocysteine. It carries out the reaction adenosine(37) in tRNA + 2 reduced [2Fe-2S]-[ferredoxin] + 2 S-adenosyl-L-methionine = 2-methyladenosine(37) in tRNA + 5'-deoxyadenosine + L-methionine + 2 oxidized [2Fe-2S]-[ferredoxin] + S-adenosyl-L-homocysteine. Specifically methylates position 2 of adenine 2503 in 23S rRNA and position 2 of adenine 37 in tRNAs. m2A2503 modification seems to play a crucial role in the proofreading step occurring at the peptidyl transferase center and thus would serve to optimize ribosomal fidelity. The protein is Dual-specificity RNA methyltransferase RlmN of Caulobacter vibrioides (strain ATCC 19089 / CIP 103742 / CB 15) (Caulobacter crescentus).